Here is a 320-residue protein sequence, read N- to C-terminus: Phospho-N-acetylmuramoyl-pentapeptide-transferase (320 aa).

Transmembrane regions (helical) follow at residues 5 to 25, 51 to 71, 75 to 95, 121 to 141, 143 to 163, 176 to 196, 198 to 218, 241 to 261, and 300 to 320; these read FWAF…VIKF, MGGA…SVAY, IGFV…IIGG, LCAV…ILNI, FIGV…WLVG, GLLT…ALGV, NHII…FLLF, IESI…IFVI, and IDAL…LYMS.

It belongs to the glycosyltransferase 4 family. MraY subfamily. Mg(2+) is required as a cofactor.

The protein resides in the cell membrane. It carries out the reaction UDP-N-acetyl-alpha-D-muramoyl-L-alanyl-gamma-D-glutamyl-L-lysyl-D-alanyl-D-alanine + di-trans,octa-cis-undecaprenyl phosphate = Mur2Ac(oyl-L-Ala-gamma-D-Glu-L-Lys-D-Ala-D-Ala)-di-trans,octa-cis-undecaprenyl diphosphate + UMP. It participates in cell wall biogenesis; peptidoglycan biosynthesis. In terms of biological role, catalyzes the initial step of the lipid cycle reactions in the biosynthesis of the cell wall peptidoglycan: transfers peptidoglycan precursor phospho-MurNAc-pentapeptide from UDP-MurNAc-pentapeptide onto the lipid carrier undecaprenyl phosphate, yielding undecaprenyl-pyrophosphoryl-MurNAc-pentapeptide, known as lipid I. In Leuconostoc mesenteroides subsp. mesenteroides (strain ATCC 8293 / DSM 20343 / BCRC 11652 / CCM 1803 / JCM 6124 / NCDO 523 / NBRC 100496 / NCIMB 8023 / NCTC 12954 / NRRL B-1118 / 37Y), this protein is Phospho-N-acetylmuramoyl-pentapeptide-transferase.